Consider the following 545-residue polypeptide: Glucose-6-phosphate isomerase (545 aa).

The active-site Proton donor is Glu-351. Active-site residues include His-382 and Lys-510.

It belongs to the GPI family.

It localises to the cytoplasm. The enzyme catalyses alpha-D-glucose 6-phosphate = beta-D-fructose 6-phosphate. Its pathway is carbohydrate biosynthesis; gluconeogenesis. The protein operates within carbohydrate degradation; glycolysis; D-glyceraldehyde 3-phosphate and glycerone phosphate from D-glucose: step 2/4. Its function is as follows. Catalyzes the reversible isomerization of glucose-6-phosphate to fructose-6-phosphate. The sequence is that of Glucose-6-phosphate isomerase from Helicobacter pylori (strain HPAG1).